Reading from the N-terminus, the 1108-residue chain is Retinal guanylyl cyclase 2 (1108 aa).

Residues 1-50 form the signal peptide; sequence MFLGLGRFSRLVLWFAAFRKLLGHHGLASAKFLWCLCLLSVMSLPQQVWT. Topologically, residues 51–467 are extracellular; that stretch reads LPYKIGVVGP…KICHGGIDPA (417 aa). The cysteines at positions 104 and 132 are disulfide-linked. Residues 468–490 traverse the membrane as a helical segment; sequence FAMMVCLTLLIALLSINGFAYFI. Residues 491 to 1108 lie on the Cytoplasmic side of the membrane; sequence RRRINKIQLI…AERQLVRNKP (618 aa). The Protein kinase domain maps to 532 to 812; sequence FQITSEVQSG…DEIFNQFKTF (281 aa). One can recognise a Guanylate cyclase domain in the interval 884–1014; that stretch reads TLYFSDIVGF…DTVNTASRME (131 aa).

Belongs to the adenylyl cyclase class-4/guanylyl cyclase family. Homodimer. Interacts with RD3; promotes the exit of GUCY2F from the endoplasmic reticulum and its trafficking to the photoreceptor outer segments. Post-translationally, there are 9 conserved cysteine residues in sensory guanylate cyclases, 6 in the extracellular domain, which may be involved in intra- or interchain disulfide bonds. As to expression, retina. Localized exclusively in the outer nuclear layer and inner segments of the rod and cone photoreceptor cells.

It localises to the photoreceptor outer segment membrane. It catalyses the reaction GTP = 3',5'-cyclic GMP + diphosphate. Activated by GUCA1B when free calcium ions concentration is low, and inhibited by GUCA1B when free calcium ions concentration is high. Inhibited by RD3. Functionally, responsible for the synthesis of cyclic GMP (cGMP) in rods and cones of photoreceptors. Plays an essential role in phototransduction, by mediating cGMP replenishment. May also participate in the trafficking of membrane-asociated proteins to the photoreceptor outer segment membrane. The sequence is that of Retinal guanylyl cyclase 2 (GUCY2F) from Homo sapiens (Human).